The primary structure comprises 140 residues: Actin-depolymerizing factor 10 (140 aa).

Phosphoserine is present on Ser6. In terms of domain architecture, ADF-H spans 7 to 139 (GMHVSDECKL…SLDIIKGRVN (133 aa)).

This sequence belongs to the actin-binding proteins ADF family.

It localises to the cytoplasm. The protein resides in the cytoskeleton. In terms of biological role, actin-depolymerizing protein. Severs actin filaments (F-actin) and binds to actin monomers. This chain is Actin-depolymerizing factor 10 (ADF10), found in Arabidopsis thaliana (Mouse-ear cress).